A 239-amino-acid polypeptide reads, in one-letter code: tRNA (guanine-N(7)-)-methyltransferase (239 aa).

S-adenosyl-L-methionine is bound by residues Glu69, Glu94, Asp121, and Asp144. Residue Asp144 is part of the active site. Lys148 serves as a coordination point for substrate. An interaction with RNA region spans residues 150–155; it reads RHNKRR. Substrate contacts are provided by residues Asp180 and 217-220; that span reads TKFE.

The protein belongs to the class I-like SAM-binding methyltransferase superfamily. TrmB family. As to quaternary structure, monomer.

It catalyses the reaction guanosine(46) in tRNA + S-adenosyl-L-methionine = N(7)-methylguanosine(46) in tRNA + S-adenosyl-L-homocysteine. Its pathway is tRNA modification; N(7)-methylguanine-tRNA biosynthesis. Catalyzes the formation of N(7)-methylguanine at position 46 (m7G46) in tRNA. This chain is tRNA (guanine-N(7)-)-methyltransferase, found in Shigella boydii serotype 4 (strain Sb227).